We begin with the raw amino-acid sequence, 141 residues long: Acetyltransferase YpeA (141 aa).

Residues 1–141 (MEIRVFRQED…GKRLIEDEEY (141 aa)) form the N-acetyltransferase domain.

The protein belongs to the acetyltransferase family. YpeA subfamily.

This chain is Acetyltransferase YpeA, found in Shigella boydii serotype 4 (strain Sb227).